A 382-amino-acid polypeptide reads, in one-letter code: Histone acetyltransferase type B subunit 2 (382 aa).

5 WD repeats span residues 98 to 138, 141 to 181, 184 to 224, 228 to 268, and 275 to 315; these read ENNA…RYSH, PHTK…TTFK, IQKD…VVSQ, ESSN…ENSG, and GHSE…EEQQ. The segment at 317–321 is interaction with the histone H4 N-terminus; sequence EDAED. The WD 6 repeat unit spans residues 332 to 372; that stretch reads GHTAGVSDLSWCPFKDWMIGSVADDNIVHLWEISKKLITNE.

It belongs to the WD repeat RBAP46/RBAP48/MSI1 family. As to quaternary structure, component of the HAT-B complex composed of at least HAT1 and HAT2. The HAT-B complex binds to histone H4 tail.

It is found in the cytoplasm. It localises to the nucleus. Functionally, regulatory subunit of the histone acetylase B (HAT-B) complex. The complex acetylates 'Lys-14' of histone H4 which is required for telomeric silencing. The sequence is that of Histone acetyltransferase type B subunit 2 (HAT2) from Candida albicans (strain SC5314 / ATCC MYA-2876) (Yeast).